Here is a 260-residue protein sequence, read N- to C-terminus: Triosephosphate isomerase (260 aa).

11–13 (NWK) provides a ligand contact to substrate. H103 acts as the Electrophile in catalysis. E175 (proton acceptor) is an active-site residue. Residues G181, S220, and 241–242 (GG) each bind substrate.

The protein belongs to the triosephosphate isomerase family. As to quaternary structure, homodimer.

It localises to the cytoplasm. It carries out the reaction D-glyceraldehyde 3-phosphate = dihydroxyacetone phosphate. Its pathway is carbohydrate biosynthesis; gluconeogenesis. It participates in carbohydrate degradation; glycolysis; D-glyceraldehyde 3-phosphate from glycerone phosphate: step 1/1. Involved in the gluconeogenesis. Catalyzes stereospecifically the conversion of dihydroxyacetone phosphate (DHAP) to D-glyceraldehyde-3-phosphate (G3P). This is Triosephosphate isomerase from Shewanella piezotolerans (strain WP3 / JCM 13877).